We begin with the raw amino-acid sequence, 294 residues long: Syntaxin-19 (294 aa).

Residues 209–271 (LSEIEQRHKE…NNTKEKFGLA (63 aa)) form the t-SNARE coiled-coil homology domain.

The protein belongs to the syntaxin family. As to quaternary structure, interacts with EGFR.

The protein localises to the cell membrane. It is found in the cytoplasm. Its function is as follows. Plays a role in endosomal trafficking of the epidermal growth factor receptor (EGFR). The chain is Syntaxin-19 (STX19) from Pongo abelii (Sumatran orangutan).